We begin with the raw amino-acid sequence, 246 residues long: Acetoacetate decarboxylase (246 aa).

Residue Lys-116 is the Schiff-base intermediate with acetoacetate of the active site.

It belongs to the ADC family.

It catalyses the reaction acetoacetate + H(+) = acetone + CO2. Catalyzes the conversion of acetoacetate to acetone and carbon dioxide. This Burkholderia mallei (strain NCTC 10247) protein is Acetoacetate decarboxylase.